The primary structure comprises 189 residues: 5-hmdU DNA kinase (189 aa).

The protein belongs to the thymidylate kinase family. 5-hmdU DNA kinase subfamily.

The catalysed reaction is 5-hydroxymethyl-dUMP in DNA + ATP = 5-phosphomethyl-dUMP in DNA + ADP + H(+). Its function is as follows. Phosphorylates 5-hydroxymethyluracil (5hmdU) into 5-phosphomethyl-2'-deoxyuridine (5- PmdU) on DNA as a step in the pathway leading to thymidine hypermodifications in the viral genome. The phosphate is added internally to the DNA polymer. As a final result of the pathway of hypermodification, 5-AcNmdU substitutes for a subset of thymidines in the viral DNA. These modifications probably prevent degradation of viral genome by the host restriction-modification antiviral defense system. This chain is 5-hmdU DNA kinase, found in Pseudomonas phage PaMx11.